Reading from the N-terminus, the 145-residue chain is D-aminoacyl-tRNA deacylase (145 aa).

Positions 137–138 (GP) match the Gly-cisPro motif, important for rejection of L-amino acids motif.

This sequence belongs to the DTD family. In terms of assembly, homodimer.

The protein localises to the cytoplasm. The enzyme catalyses glycyl-tRNA(Ala) + H2O = tRNA(Ala) + glycine + H(+). It catalyses the reaction a D-aminoacyl-tRNA + H2O = a tRNA + a D-alpha-amino acid + H(+). Its function is as follows. An aminoacyl-tRNA editing enzyme that deacylates mischarged D-aminoacyl-tRNAs. Also deacylates mischarged glycyl-tRNA(Ala), protecting cells against glycine mischarging by AlaRS. Acts via tRNA-based rather than protein-based catalysis; rejects L-amino acids rather than detecting D-amino acids in the active site. By recycling D-aminoacyl-tRNA to D-amino acids and free tRNA molecules, this enzyme counteracts the toxicity associated with the formation of D-aminoacyl-tRNA entities in vivo and helps enforce protein L-homochirality. This chain is D-aminoacyl-tRNA deacylase, found in Shewanella baltica (strain OS155 / ATCC BAA-1091).